A 299-amino-acid chain; its full sequence is Aspartate carbamoyltransferase catalytic subunit (299 aa).

Residues Arg51 and Thr52 each coordinate carbamoyl phosphate. Lys80 provides a ligand contact to L-aspartate. The carbamoyl phosphate site is built by Arg101, His129, and Gln132. L-aspartate-binding residues include Arg162 and Arg221. Positions 260 and 261 each coordinate carbamoyl phosphate.

This sequence belongs to the aspartate/ornithine carbamoyltransferase superfamily. ATCase family. As to quaternary structure, heterooligomer of catalytic and regulatory chains.

It catalyses the reaction carbamoyl phosphate + L-aspartate = N-carbamoyl-L-aspartate + phosphate + H(+). It functions in the pathway pyrimidine metabolism; UMP biosynthesis via de novo pathway; (S)-dihydroorotate from bicarbonate: step 2/3. Functionally, catalyzes the condensation of carbamoyl phosphate and aspartate to form carbamoyl aspartate and inorganic phosphate, the committed step in the de novo pyrimidine nucleotide biosynthesis pathway. The chain is Aspartate carbamoyltransferase catalytic subunit from Sulfolobus acidocaldarius (strain ATCC 33909 / DSM 639 / JCM 8929 / NBRC 15157 / NCIMB 11770).